Here is a 459-residue protein sequence, read N- to C-terminus: Probable PTS system sucrose-specific EIIBC component (459 aa).

Residues 1–86 form the PTS EIIB type-1 domain; the sequence is MHKEIAKELL…VHVWETAPSE (86 aa). Cys-25 serves as the catalytic Phosphocysteine intermediate; for EIIB activity. The 354-residue stretch at 106-459 folds into the PTS EIIC type-1 domain; sequence KTLSDIFVPI…LFLGFKEETE (354 aa). 11 helical membrane passes run 111 to 131, 147 to 167, 177 to 197, 209 to 229, 245 to 265, 288 to 308, 329 to 349, 360 to 380, 388 to 408, 412 to 432, and 434 to 454; these read IFVP…LIGM, MLDL…GFSA, LGAV…SMLG, LHIP…SVFV, LDVV…ALIV, AGIA…LSGL, FLVP…LAVF, IALP…VFGV, FIGA…VQVV, YGLT…ANFV, and YMIG…FLGF.

It localises to the cell membrane. The phosphoenolpyruvate-dependent sugar phosphotransferase system (sugar PTS), a major carbohydrate active -transport system, catalyzes the phosphorylation of incoming sugar substrates concomitantly with their translocation across the cell membrane. This system may be involved in sucrose transport. The EIIB domain is mainly phosphorylated by the EIIA domains of GamP and PtsA/YpqE. Its function is as follows. Negatively regulates SacY activity by catalyzing its phosphorylation on 'His-99'. The polypeptide is Probable PTS system sucrose-specific EIIBC component (sacX) (Bacillus subtilis (strain 168)).